A 321-amino-acid chain; its full sequence is Anthranilate phosphoribosyltransferase (321 aa).

Residues G72, 75-76, T80, 82-85, 99-107, and S111 contribute to the 5-phospho-alpha-D-ribose 1-diphosphate site; these read GD, NVST, and KHGNVSITS. G72 serves as a coordination point for anthranilate. Residue S84 participates in Mg(2+) binding. Anthranilate is bound at residue N102. R157 is an anthranilate binding site. Residues D216 and E217 each contribute to the Mg(2+) site.

Belongs to the anthranilate phosphoribosyltransferase family. In terms of assembly, homodimer. The cofactor is Mg(2+).

It carries out the reaction N-(5-phospho-beta-D-ribosyl)anthranilate + diphosphate = 5-phospho-alpha-D-ribose 1-diphosphate + anthranilate. It participates in amino-acid biosynthesis; L-tryptophan biosynthesis; L-tryptophan from chorismate: step 2/5. In terms of biological role, catalyzes the transfer of the phosphoribosyl group of 5-phosphorylribose-1-pyrophosphate (PRPP) to anthranilate to yield N-(5'-phosphoribosyl)-anthranilate (PRA). This Methanococcus maripaludis (strain C7 / ATCC BAA-1331) protein is Anthranilate phosphoribosyltransferase.